Here is a 63-residue protein sequence, read N- to C-terminus: Large ribosomal subunit protein uL29 (63 aa).

The protein belongs to the universal ribosomal protein uL29 family.

The chain is Large ribosomal subunit protein uL29 from Shewanella frigidimarina (strain NCIMB 400).